The following is a 591-amino-acid chain: Aspartate--tRNA(Asp/Asn) ligase (591 aa).

E176 is a binding site for L-aspartate. Residues 200 to 203 (QLFK) are aspartate. R222 contributes to the L-aspartate binding site. ATP contacts are provided by residues 222 to 224 (RDE) and Q231. Residue H450 coordinates L-aspartate. Position 484 (E484) interacts with ATP. R491 contacts L-aspartate. 536–539 (GLDR) contributes to the ATP binding site.

This sequence belongs to the class-II aminoacyl-tRNA synthetase family. Type 1 subfamily. As to quaternary structure, homodimer.

The protein localises to the cytoplasm. The catalysed reaction is tRNA(Asx) + L-aspartate + ATP = L-aspartyl-tRNA(Asx) + AMP + diphosphate. In terms of biological role, aspartyl-tRNA synthetase with relaxed tRNA specificity since it is able to aspartylate not only its cognate tRNA(Asp) but also tRNA(Asn). Reaction proceeds in two steps: L-aspartate is first activated by ATP to form Asp-AMP and then transferred to the acceptor end of tRNA(Asp/Asn). This chain is Aspartate--tRNA(Asp/Asn) ligase, found in Bacillus cereus (strain G9842).